Reading from the N-terminus, the 931-residue chain is MSANSFDARSTLQVGDESYEIFRLDKVEGSARLPYSLKVLLENLLRTEDGANITADHIRALGGWDSQAQPSQEIQFTPARVIMQDFTGVPCVVDLATMREAVKELGGDPAKINPLAPAELVIDHSVIADKFGTNDAFKQNVELEYGRNKERYQFLRWGQTAFDEFKVVPPGTGIVHQVNIEHLARTVMVRGGQAYPDTLVGTDSHTTMVNGLGVLGWGVGGIEAEAAMLGQPVSMLIPRVVGFKLTGELKPGTTATDLVLTITEMLRGHGVVGKFVEFYGEGVAATSLANRATIGNMSPEFGSTAAIFPIDDETLNYLRLTGRSEQQVALVESYAKEQGLWLDPAAEPDFSEKLELDLSTVVPSIAGPKRPQDRIVLAEAAQQFAKDVLNYVEAPAAQPAASASPVDEASAESFPASDAPAYGSQENGAGAPQHADGTGAAVPSNPVTVTAPDGTSYEIDHGAVTVAAITSCTNTSNPYVMVAAALVAKKAVEKGLTRKPWVKTTLAPGSKVVTDYFEKSGLTPYLDKVGFNLVGYGCTTCIGNSGPLPEEVSKAVNDHDLAVTSVLSGNRNFEGRINPDVKMNYLASPPLVVAYALAGSMKVDITKDALGTDQDGNPVYLKDIWPSEAEVNDVVANAIGEDMFSKSYSDVFAGDAQWQALPIPTGNTFEWDPESTYVRKPPYFEGMEMEPAPVEDIAGARVLAKLGDSVTTDHISPAGAIKADTPAGKYLTEHGVERRDFNSYGSRRGNHEVMIRGTFANIRLRNQIAPGTEGGYTRDFTKDDAPVSFIYDASRNYIEQGIPLVVLAGKEYGSGSSRDWAAKGTALLGVKAVIAESYERIHRSNLIGMGVLPLQFPEGQSAATLGLTGEETFSFSGVTELNNGTTPRTVKVTTDTGVEFDAVVRIDTPGEADYYRNGGIMQYVLRSLIRK.

A disordered region spans residues 402–454; the sequence is SASPVDEASAESFPASDAPAYGSQENGAGAPQHADGTGAAVPSNPVTVTAPDG. Positions 472, 538, and 541 each coordinate [4Fe-4S] cluster.

This sequence belongs to the aconitase/IPM isomerase family. Requires [4Fe-4S] cluster as cofactor.

It catalyses the reaction citrate = D-threo-isocitrate. The catalysed reaction is citrate = cis-aconitate + H2O. It carries out the reaction cis-aconitate + H2O = D-threo-isocitrate. It functions in the pathway carbohydrate metabolism; tricarboxylic acid cycle; isocitrate from oxaloacetate: step 2/2. Its function is as follows. Catalyzes the reversible isomerization of citrate to isocitrate via cis-aconitate in the tricarboxylic acid (TCA) cycle. Aconitase activity is important for the initiation of morphological and physiological differentiation of S.viridochromogenes. In addition, the apo form of AcnA (lacking the [4Fe-4S] cluster) functions as a RNA-binding regulatory protein, which binds to iron responsive elements (IREs) located on the untranslated region of certain mRNAs, including recA and ftsZ. Binding to IRE-like structures probably alters the target mRNA stability and regulates the protein amount. The apo form plays a regulatory role in oxidative stress response. In Streptomyces viridochromogenes (strain DSM 40736 / JCM 4977 / BCRC 1201 / Tue 494), this protein is Aconitate hydratase A.